The primary structure comprises 624 residues: Bifunctional 3'-phosphoadenosine 5'-phosphosulfate synthase 1 (624 aa).

N-acetylmethionine is present on Met1. The interval 1–225 is adenylyl-sulfate kinase; the sequence is MEIPGSLCKK…VVELLQERDI (225 aa). At Lys12 the chain carries N6-acetyllysine. 62–67 is a binding site for ATP; that stretch reads GAGKTT. Residues 89–92, Phe101, 106–109, 132–133, Lys171, and 184–185 contribute to the adenosine 5'-phosphosulfate site; these read DNIR, REEN, IS, and GF. ATP-binding positions include Cys207, Cys212, 419–422, 521–525, and Ala563; these read QLRN and GRDPA. The tract at residues 234–624 is sulfate adenylyltransferase; the sequence is VKELYVPENK…TEYYKSLEKA (391 aa).

It in the N-terminal section; belongs to the APS kinase family. This sequence in the C-terminal section; belongs to the sulfate adenylyltransferase family. In terms of assembly, homodimer. Expressed in testis, pancreas, kidney, thymus, prostate, ovary, small intestine, colon, leukocytes and liver. Also expressed in high endothelial venules (HEV) cells and in cartilage.

It carries out the reaction sulfate + ATP + H(+) = adenosine 5'-phosphosulfate + diphosphate. The catalysed reaction is adenosine 5'-phosphosulfate + ATP = 3'-phosphoadenylyl sulfate + ADP + H(+). It participates in sulfur metabolism; sulfate assimilation. Inhibited by chlorate. The kinase activity is subject to inhibition by the substrate adenylyl sulfate. In terms of biological role, bifunctional enzyme with both ATP sulfurylase and APS kinase activity, which mediates two steps in the sulfate activation pathway. The first step is the transfer of a sulfate group to ATP to yield adenosine 5'-phosphosulfate (APS), and the second step is the transfer of a phosphate group from ATP to APS yielding 3'-phosphoadenylylsulfate (PAPS: activated sulfate donor used by sulfotransferase). In mammals, PAPS is the sole source of sulfate; APS appears to be only an intermediate in the sulfate-activation pathway. Required for normal biosynthesis of sulfated L-selectin ligands in endothelial cells. This chain is Bifunctional 3'-phosphoadenosine 5'-phosphosulfate synthase 1 (PAPSS1), found in Homo sapiens (Human).